Reading from the N-terminus, the 430-residue chain is RNA pseudouridine synthase 2, chloroplastic (430 aa).

The N-terminal 43 residues, 1–43 (MLSISQLPSFSLTTAKSLRYPSSPSSSLSIFFSFFPKVSNFVR), are a transit peptide targeting the chloroplast. Positions 82–155 (IRLDSWISSR…IPLDIVYEDK (74 aa)) constitute an S4 RNA-binding domain. The segment at 195–222 (SNSEEDDDSDEETFSDDEEMTTSPSSYA) is disordered. Residues 196–214 (NSEEDDDSDEETFSDDEEM) are compositionally biased toward acidic residues. Residue Asp-234 is part of the active site.

Belongs to the pseudouridine synthase RluA family.

The protein localises to the plastid. The protein resides in the chloroplast. The enzyme catalyses a uridine in RNA = a pseudouridine in RNA. The chain is RNA pseudouridine synthase 2, chloroplastic from Arabidopsis thaliana (Mouse-ear cress).